The following is a 320-amino-acid chain: tRNA dimethylallyltransferase (320 aa).

Residue 17–24 (GPTAVGKT) coordinates ATP. Substrate is bound at residue 19-24 (TAVGKT). The interaction with substrate tRNA stretch occupies residues 42 to 45 (DSMQ).

This sequence belongs to the IPP transferase family. Monomer. Mg(2+) serves as cofactor.

It carries out the reaction adenosine(37) in tRNA + dimethylallyl diphosphate = N(6)-dimethylallyladenosine(37) in tRNA + diphosphate. In terms of biological role, catalyzes the transfer of a dimethylallyl group onto the adenine at position 37 in tRNAs that read codons beginning with uridine, leading to the formation of N6-(dimethylallyl)adenosine (i(6)A). This chain is tRNA dimethylallyltransferase, found in Bacillus thuringiensis (strain Al Hakam).